A 261-amino-acid polypeptide reads, in one-letter code: tRNA pseudouridine synthase A (261 aa).

Asp51 functions as the Nucleophile in the catalytic mechanism. Tyr109 is a substrate binding site.

This sequence belongs to the tRNA pseudouridine synthase TruA family. In terms of assembly, homodimer.

The catalysed reaction is uridine(38/39/40) in tRNA = pseudouridine(38/39/40) in tRNA. Its function is as follows. Formation of pseudouridine at positions 38, 39 and 40 in the anticodon stem and loop of transfer RNAs. This is tRNA pseudouridine synthase A from Shewanella sediminis (strain HAW-EB3).